The chain runs to 397 residues: Guanine nucleotide-binding protein G(s) subunit alpha (397 aa).

Residues Met-1 to Asn-23 form a disordered region. Gly-2 carries the N-palmitoyl glycine lipid modification. Cys-3 is lipidated: S-palmitoyl cysteine. A compositionally biased stretch (basic and acidic residues) spans Lys-8 to Asn-23. The region spanning Ala-39–Leu-397 is the G-alpha domain. The segment at Arg-42–Thr-55 is G1 motif. Residues Gly-47–Thr-55, Leu-182–Thr-189, Asp-208–Gln-212, Asn-277–Asp-280, and Ala-369 each bind GTP. Residues Ser-54 and Thr-189 each coordinate Mg(2+). Residues Asp-181–Thr-189 are G2 motif. The G3 motif stretch occupies residues Phe-204–Arg-213. A G4 motif region spans residues Ile-273–Asp-280. A G5 motif region spans residues Thr-367 to Thr-372.

This sequence belongs to the G-alpha family. G(s) subfamily. As to quaternary structure, heterotrimeric G proteins are composed of 3 units; alpha, beta and gamma. The alpha chain contains the guanine nucleotide binding site. Interacts with CRY1; the interaction may block GPCR-mediated regulation of cAMP concentrations. Interacts with ADCY6 and stimulates its adenylyl cyclase activity. Interacts with ADCY2 and ADCY5. Stimulates the ADCY5 adenylyl cyclase activity. Interaction with SASH1.

It is found in the cell membrane. Guanine nucleotide-binding proteins (G proteins) function as transducers in numerous signaling pathways controlled by G protein-coupled receptors (GPCRs). Signaling involves the activation of adenylyl cyclases, resulting in increased levels of the signaling molecule cAMP. GNAS functions downstream of several GPCRs, including beta-adrenergic receptors. Stimulates the Ras signaling pathway via RAPGEF2. The polypeptide is Guanine nucleotide-binding protein G(s) subunit alpha (GNAS) (Sus scrofa (Pig)).